Reading from the N-terminus, the 92-residue chain is Protein RESPONSE TO LOW SULFUR 4 (92 aa).

A coiled-coil region spans residues V8–E63.

In terms of biological role, required for flower development in short-day conditions. The polypeptide is Protein RESPONSE TO LOW SULFUR 4 (Arabidopsis thaliana (Mouse-ear cress)).